A 524-amino-acid chain; its full sequence is Probable glycine dehydrogenase (decarboxylating) subunit 2 (524 aa).

K296 bears the N6-(pyridoxal phosphate)lysine mark.

This sequence belongs to the GcvP family. C-terminal subunit subfamily. The glycine cleavage system is composed of four proteins: P, T, L and H. In this organism, the P 'protein' is a heterodimer of two subunits. Pyridoxal 5'-phosphate is required as a cofactor.

The enzyme catalyses N(6)-[(R)-lipoyl]-L-lysyl-[glycine-cleavage complex H protein] + glycine + H(+) = N(6)-[(R)-S(8)-aminomethyldihydrolipoyl]-L-lysyl-[glycine-cleavage complex H protein] + CO2. Its function is as follows. The glycine cleavage system catalyzes the degradation of glycine. The P protein binds the alpha-amino group of glycine through its pyridoxal phosphate cofactor; CO(2) is released and the remaining methylamine moiety is then transferred to the lipoamide cofactor of the H protein. This chain is Probable glycine dehydrogenase (decarboxylating) subunit 2, found in Caulobacter vibrioides (strain ATCC 19089 / CIP 103742 / CB 15) (Caulobacter crescentus).